A 1304-amino-acid polypeptide reads, in one-letter code: TPR-containing protein DDB_G0280363 (1304 aa).

6 disordered regions span residues 19–85 (QQHH…HPQQ), 153–195 (NINN…NSSL), 296–334 (LPSTNSSIVSRQQQLQQQQQKLKLKSSPSPISPFFYTQQ), 447–477 (GFNWSPSLQPDQSTSTNHTQAMLQQQQQRQQ), 576–687 (QNQQ…VTTI), and 706–728 (LTTVNHSKPPPNESKRGELVESP). Composition is skewed to low complexity over residues 25 to 44 (QQNNTQVQQQQQQHTTQFNQ), 52 to 85 (HQQHQQQQHHQQQHHQQQQQQQQQQQQQQQHPQQ), and 153 to 194 (NINN…NNSS). Over residues 296-306 (LPSTNSSIVSR) the composition is skewed to polar residues. Over residues 307–316 (QQQLQQQQQK) the composition is skewed to low complexity. A compositionally biased stretch (polar residues) spans 448–465 (FNWSPSLQPDQSTSTNHT). Low complexity-rich tracts occupy residues 466–477 (QAMLQQQQQRQQ) and 576–597 (QNQQQNQQQNQQQNQQHYPNQH). Residues 598–625 (HGQHQHNQHNQHHNQHHNQSHPNHKNQH) show a composition bias toward basic residues. The span at 626 to 687 (QKQNQTQQST…NNNTNNVTTI (62 aa)) shows a compositional bias: low complexity. 7 TPR repeats span residues 769–802 (WRVYLELADLANRQNNLKLARKFYRKVTSTQPYI), 899–932 (MKHVPWYGPIYQEAYKLEERCEEYERAINIVEKG), 978–1011 (WKIYFEAAQIEERSKNLTLSRAAYVKSVELCPEN), 1046–1079 (SKLRSLVLLEYSRLEEYAGNINKSRRILKMAHVE), 1084–1111 (WKVFLESVLLEMRANNYEAAIKEAKESL), 1112–1150 (KIHSGAGRLWAALIQLNQLKGVKSQLNVFKKALQFVPKS), and 1152–1184 (EVWCEGARIALNNNELREARRFLEFAIQFTPQF).

The polypeptide is TPR-containing protein DDB_G0280363 (Dictyostelium discoideum (Social amoeba)).